The following is a 256-amino-acid chain: Cell division protein FtsQ (256 aa).

The Cytoplasmic segment spans residues 1–23 (MIKAVKMNTSFDKEKVRKHLPGA). Residues 24–44 (IFLSLVVITSLWLVISTISWM) traverse the membrane as a helical segment. Residues 45–256 (TDEDRLPLSH…SDDVENKEEN (212 aa)) lie on the Periplasmic side of the membrane. Residues 50-120 (LPLSHMIIQG…ETIKVFVVEH (71 aa)) form the POTRA domain.

The protein belongs to the FtsQ/DivIB family. FtsQ subfamily. In terms of assembly, part of a complex composed of FtsB, FtsL and FtsQ.

The protein localises to the cell inner membrane. Its function is as follows. Essential cell division protein. May link together the upstream cell division proteins, which are predominantly cytoplasmic, with the downstream cell division proteins, which are predominantly periplasmic. May control correct divisome assembly. The chain is Cell division protein FtsQ from Aliivibrio fischeri (strain ATCC 700601 / ES114) (Vibrio fischeri).